The chain runs to 751 residues: Catalase-peroxidase (751 aa).

The disordered stretch occupies residues 1 to 21 (MSNESKCPFHQTAGGGTTNRD). A cross-link (tryptophyl-tyrosyl-methioninium (Trp-Tyr) (with M-270)) is located at residues 90 to 244 (WHSAGTYRIG…LAAVQMGLIY (155 aa)). The Proton acceptor role is filled by histidine 91. The segment at 195–227 (YGKDQVKAQPPGQGDLVAEPAKHGEEQNRDLSA) is disordered. The span at 214 to 227 (PAKHGEEQNRDLSA) shows a compositional bias: basic and acidic residues. The segment at residues 244–270 (YVNPEGPEGNPDPVASGKDIRETFGRM) is a cross-link (tryptophyl-tyrosyl-methioninium (Tyr-Met) (with W-90)). Histidine 285 provides a ligand contact to heme b. A disordered region spans residues 364-385 (GAHQWRPKDGKGAGTVPDAHDP).

It belongs to the peroxidase family. Peroxidase/catalase subfamily. In terms of assembly, homodimer or homotetramer. Heme b is required as a cofactor. Post-translationally, formation of the three residue Trp-Tyr-Met cross-link is important for the catalase, but not the peroxidase activity of the enzyme.

It catalyses the reaction H2O2 + AH2 = A + 2 H2O. It carries out the reaction 2 H2O2 = O2 + 2 H2O. Its function is as follows. Bifunctional enzyme with both catalase and broad-spectrum peroxidase activity. This is Catalase-peroxidase from Pseudomonas putida (strain ATCC 47054 / DSM 6125 / CFBP 8728 / NCIMB 11950 / KT2440).